Consider the following 379-residue polypeptide: Homoserine O-succinyltransferase (379 aa).

Residues 51–360 (NAVLICHALS…DAPQGHDAFL (310 aa)) form the AB hydrolase-1 domain. The active-site Nucleophile is the serine 157. Arginine 227 lines the substrate pocket. Active-site residues include aspartate 323 and histidine 356. Aspartate 357 provides a ligand contact to substrate.

Belongs to the AB hydrolase superfamily. MetX family. As to quaternary structure, homodimer.

Its subcellular location is the cytoplasm. The catalysed reaction is L-homoserine + succinyl-CoA = O-succinyl-L-homoserine + CoA. It functions in the pathway amino-acid biosynthesis; L-methionine biosynthesis via de novo pathway; O-succinyl-L-homoserine from L-homoserine: step 1/1. Its function is as follows. Transfers a succinyl group from succinyl-CoA to L-homoserine, forming succinyl-L-homoserine. This Pseudomonas fluorescens (strain Pf0-1) protein is Homoserine O-succinyltransferase.